We begin with the raw amino-acid sequence, 590 residues long: Aspartate--tRNA(Asp/Asn) ligase (590 aa).

Position 170 (E170) interacts with L-aspartate. Residues 194–197 (QLFK) are aspartate. Residue R216 participates in L-aspartate binding. ATP contacts are provided by residues 216-218 (RDE) and Q225. An L-aspartate-binding site is contributed by H448. E482 is a binding site for ATP. R489 is an L-aspartate binding site. Residue 534–537 (GWDR) coordinates ATP. The disordered stretch occupies residues 557–590 (SGGGADPLTGAPAPITPQQRRESGIDAKPKKDGE). Over residues 575-590 (QRRESGIDAKPKKDGE) the composition is skewed to basic and acidic residues.

Belongs to the class-II aminoacyl-tRNA synthetase family. Type 1 subfamily. Homodimer.

The protein resides in the cytoplasm. It carries out the reaction tRNA(Asx) + L-aspartate + ATP = L-aspartyl-tRNA(Asx) + AMP + diphosphate. In terms of biological role, aspartyl-tRNA synthetase with relaxed tRNA specificity since it is able to aspartylate not only its cognate tRNA(Asp) but also tRNA(Asn). Reaction proceeds in two steps: L-aspartate is first activated by ATP to form Asp-AMP and then transferred to the acceptor end of tRNA(Asp/Asn). This Mycobacterium sp. (strain JLS) protein is Aspartate--tRNA(Asp/Asn) ligase.